A 319-amino-acid polypeptide reads, in one-letter code: Acetyl-coenzyme A carboxylase carboxyl transferase subunit alpha (319 aa).

The region spanning Arg-39–Glu-293 is the CoA carboxyltransferase C-terminal domain.

Belongs to the AccA family. Acetyl-CoA carboxylase is a heterohexamer composed of biotin carboxyl carrier protein (AccB), biotin carboxylase (AccC) and two subunits each of ACCase subunit alpha (AccA) and ACCase subunit beta (AccD).

It localises to the cytoplasm. It catalyses the reaction N(6)-carboxybiotinyl-L-lysyl-[protein] + acetyl-CoA = N(6)-biotinyl-L-lysyl-[protein] + malonyl-CoA. Its pathway is lipid metabolism; malonyl-CoA biosynthesis; malonyl-CoA from acetyl-CoA: step 1/1. In terms of biological role, component of the acetyl coenzyme A carboxylase (ACC) complex. First, biotin carboxylase catalyzes the carboxylation of biotin on its carrier protein (BCCP) and then the CO(2) group is transferred by the carboxyltransferase to acetyl-CoA to form malonyl-CoA. This is Acetyl-coenzyme A carboxylase carboxyl transferase subunit alpha from Neisseria gonorrhoeae (strain ATCC 700825 / FA 1090).